Consider the following 842-residue polypeptide: Translation initiation factor IF-2 (842 aa).

2 disordered regions span residues 42–91 (ETKR…NLSS) and 139–253 (LQKQ…NQEP). 2 stretches are compositionally biased toward basic and acidic residues: residues 176-190 (IEKRKIDENQEEERH) and 199-214 (SEIRAPKIVKGADERR). Positions 340-509 (PRPPVVTIMG…LLQAEMLDLK (170 aa)) constitute a tr-type G domain. The interval 349–356 (GHVDHGKT) is G1. 349–356 (GHVDHGKT) lines the GTP pocket. A G2 region spans residues 374–378 (GITQH). The G3 stretch occupies residues 395 to 398 (DTPG). Residues 395 to 399 (DTPGH) and 449 to 452 (NKID) contribute to the GTP site. The tract at residues 449–452 (NKID) is G4. A G5 region spans residues 485–487 (SAK).

It belongs to the TRAFAC class translation factor GTPase superfamily. Classic translation factor GTPase family. IF-2 subfamily.

Its subcellular location is the cytoplasm. One of the essential components for the initiation of protein synthesis. Protects formylmethionyl-tRNA from spontaneous hydrolysis and promotes its binding to the 30S ribosomal subunits. Also involved in the hydrolysis of GTP during the formation of the 70S ribosomal complex. In Bartonella tribocorum (strain CIP 105476 / IBS 506), this protein is Translation initiation factor IF-2.